The chain runs to 253 residues: Ribosomal RNA small subunit methyltransferase J (253 aa).

S-adenosyl-L-methionine contacts are provided by residues 98–99 (RD), 114–115 (ER), 150–151 (SS), and aspartate 172.

The protein belongs to the methyltransferase superfamily. RsmJ family.

It is found in the cytoplasm. The enzyme catalyses guanosine(1516) in 16S rRNA + S-adenosyl-L-methionine = N(2)-methylguanosine(1516) in 16S rRNA + S-adenosyl-L-homocysteine + H(+). Specifically methylates the guanosine in position 1516 of 16S rRNA. This chain is Ribosomal RNA small subunit methyltransferase J, found in Shewanella pealeana (strain ATCC 700345 / ANG-SQ1).